We begin with the raw amino-acid sequence, 22 residues long: Caerin-3.1 (22 aa).

A Lysine amide modification is found at lysine 22.

It belongs to the frog skin active peptide (FSAP) family. Caerin subfamily. As to expression, expressed by the skin dorsal glands.

The protein resides in the secreted. Antibacterial peptide with narrow spectrum of activity. Inhibits the formation of NO by neuronal nitric oxide synthase. In Litoria rothii (Roth's tree frog), this protein is Caerin-3.1.